Here is a 273-residue protein sequence, read N- to C-terminus: Nitrogenase iron protein 2 (273 aa).

Residue 8 to 15 participates in ATP binding; sequence GKGGIGKS. Cys95 is a binding site for [4Fe-4S] cluster. An ADP-ribosylarginine; by dinitrogenase reductase ADP-ribosyltransferase modification is found at Arg98. Residue Cys130 coordinates [4Fe-4S] cluster.

This sequence belongs to the NifH/BchL/ChlL family. In terms of assembly, homodimer. It depends on [4Fe-4S] cluster as a cofactor. The reversible ADP-ribosylation of Arg-98 inactivates the nitrogenase reductase and regulates nitrogenase activity.

The catalysed reaction is N2 + 8 reduced [2Fe-2S]-[ferredoxin] + 16 ATP + 16 H2O = H2 + 8 oxidized [2Fe-2S]-[ferredoxin] + 2 NH4(+) + 16 ADP + 16 phosphate + 6 H(+). Functionally, the key enzymatic reactions in nitrogen fixation are catalyzed by the nitrogenase complex, which has 2 components: the iron protein and the molybdenum-iron protein. This Methanosarcina barkeri protein is Nitrogenase iron protein 2 (nifH2).